The chain runs to 465 residues: Ribulose bisphosphate carboxylase large chain (465 aa).

Lys-4 is subject to N6,N6,N6-trimethyllysine. The substrate site is built by Asn-113 and Thr-163. Residue Lys-165 is the Proton acceptor of the active site. Position 167 (Lys-167) interacts with substrate. Residues Lys-191, Asp-193, and Glu-194 each contribute to the Mg(2+) site. Lys-191 carries the post-translational modification N6-carboxylysine. The active-site Proton acceptor is the His-284. Substrate is bound by residues Arg-285, His-317, and Ser-369.

It belongs to the RuBisCO large chain family. Type I subfamily. As to quaternary structure, heterohexadecamer of 8 large chains and 8 small chains; disulfide-linked. The disulfide link is formed within the large subunit homodimers. Mg(2+) serves as cofactor. Post-translationally, the disulfide bond which can form in the large chain dimeric partners within the hexadecamer appears to be associated with oxidative stress and protein turnover.

It localises to the plastid. The protein resides in the chloroplast. The catalysed reaction is 2 (2R)-3-phosphoglycerate + 2 H(+) = D-ribulose 1,5-bisphosphate + CO2 + H2O. It catalyses the reaction D-ribulose 1,5-bisphosphate + O2 = 2-phosphoglycolate + (2R)-3-phosphoglycerate + 2 H(+). In terms of biological role, ruBisCO catalyzes two reactions: the carboxylation of D-ribulose 1,5-bisphosphate, the primary event in carbon dioxide fixation, as well as the oxidative fragmentation of the pentose substrate in the photorespiration process. Both reactions occur simultaneously and in competition at the same active site. This Nepenthes alata (Winged pitcher plant) protein is Ribulose bisphosphate carboxylase large chain.